Consider the following 198-residue polypeptide: MORN repeat-containing protein 4 homolog (198 aa).

A2 is modified (N-acetylalanine). A compositionally biased stretch (low complexity) spans 23–45 (QHQQHPHQQGQHGHHQQGQGQSQ). The interval 23-46 (QHQQHPHQQGQHGHHQQGQGQSQY) is disordered. MORN repeat units lie at residues 64–87 (YIGEWNQRGQKHGIGHLQFADGTR), 88–109 (YDGQFQEGLSQGVGCLWFADGA), 111–132 (YEGEFHQGWFHGNGIFWRADGM), and 134–153 (YEGEFRGGKIWGLGLLTFQD).

As to quaternary structure, interacts with ninaC. Phosphorylated under dark conditions and is dephosphorylated by light exposure. As to expression, retina. Expressed primarily in the phototransducing compartment of photoreceptor cells, the rhabdomeres and its expression is dependent on ninaC protein (at protein level).

It is found in the membrane. It localises to the cell projection. The protein localises to the rhabdomere membrane. In terms of biological role, plays a role in promoting axonal degeneration following neuronal injury by toxic insult or trauma. Organizes rhabdomeric components to suppress random activation of the phototransduction cascade and thus increases the signaling fidelity of dark-adapted photoreceptors. The rtp/ninaC complex is required for stability of inad and inac and the normal termination of phototransduction in the retina. The protein is MORN repeat-containing protein 4 homolog of Drosophila melanogaster (Fruit fly).